The primary structure comprises 570 residues: T-cell surface protein tactile (570 aa).

Residues M1–G21 form the signal peptide. Topologically, residues I22–M504 are extracellular. Residues G38–E125 enclose the Ig-like V-type 1 domain. N-linked (GlcNAc...) asparagine glycans are attached at residues N42, N107, N148, N156, N166, N184, N261, N284, N334, N352, N374, and N431. An intrachain disulfide couples C45 to C118. One can recognise an Ig-like V-type 2 domain in the interval N156–I222. C163 and C231 are joined by a disulfide. The 107-residue stretch at P253–T359 folds into the Ig-like C2-type domain. Residues C274 and C339 are joined by a disulfide bond. A disordered region spans residues L373–H403. The tract at residues A441–S486 is disordered. Composition is skewed to polar residues over residues S450 to G461 and F469 to S486. A glycan (N-linked (GlcNAc...) asparagine) is linked at N484. The helical transmembrane segment at S505–V525 threads the bilayer. Residues R526–L570 are Cytoplasmic-facing.

As to quaternary structure, homodimer; disulfide-linked. Interacts with PVR.

The protein resides in the membrane. Its function is as follows. May be involved in adhesive interactions of activated T and NK cells during the late phase of the immune response. Promotes NK cell-target adhesion by interacting with PVR present on target cells. May function at a time after T and NK cells have penetrated the endothelium using integrins and selectins, when they are actively engaging diseased cells and moving within areas of inflammation. In Bos taurus (Bovine), this protein is T-cell surface protein tactile (CD96).